Here is a 188-residue protein sequence, read N- to C-terminus: Elongation factor P (188 aa).

This sequence belongs to the elongation factor P family.

It localises to the cytoplasm. It functions in the pathway protein biosynthesis; polypeptide chain elongation. Functionally, involved in peptide bond synthesis. Stimulates efficient translation and peptide-bond synthesis on native or reconstituted 70S ribosomes in vitro. Probably functions indirectly by altering the affinity of the ribosome for aminoacyl-tRNA, thus increasing their reactivity as acceptors for peptidyl transferase. The sequence is that of Elongation factor P from Bacteroides fragilis (strain ATCC 25285 / DSM 2151 / CCUG 4856 / JCM 11019 / LMG 10263 / NCTC 9343 / Onslow / VPI 2553 / EN-2).